The primary structure comprises 324 residues: Ferrochelatase (324 aa).

The Fe cation site is built by His197 and Glu278.

Belongs to the ferrochelatase family.

It is found in the cytoplasm. It catalyses the reaction heme b + 2 H(+) = protoporphyrin IX + Fe(2+). It functions in the pathway porphyrin-containing compound metabolism; protoheme biosynthesis; protoheme from protoporphyrin-IX: step 1/1. Its function is as follows. Catalyzes the ferrous insertion into protoporphyrin IX. The protein is Ferrochelatase of Aeromonas hydrophila subsp. hydrophila (strain ATCC 7966 / DSM 30187 / BCRC 13018 / CCUG 14551 / JCM 1027 / KCTC 2358 / NCIMB 9240 / NCTC 8049).